Here is a 912-residue protein sequence, read N- to C-terminus: Protein translocase subunit SecA (912 aa).

Residues Gln86, 104 to 108 (GEGKT), and Asp494 each bind ATP. A disordered region spans residues 860–912 (EAPEKPAQLQYTAPGEDGASQTRVEGRSSGRSGNPAKAAQDGARKPAPKKKKR).

The protein belongs to the SecA family. As to quaternary structure, monomer and homodimer. Part of the essential Sec protein translocation apparatus which comprises SecA, SecYEG and auxiliary proteins SecDF. Other proteins may also be involved.

It is found in the cell membrane. The protein resides in the cytoplasm. It carries out the reaction ATP + H2O + cellular proteinSide 1 = ADP + phosphate + cellular proteinSide 2.. Functionally, part of the Sec protein translocase complex. Interacts with the SecYEG preprotein conducting channel. Has a central role in coupling the hydrolysis of ATP to the transfer of proteins into and across the cell membrane, serving as an ATP-driven molecular motor driving the stepwise translocation of polypeptide chains across the membrane. The polypeptide is Protein translocase subunit SecA (Arthrobacter sp. (strain FB24)).